The primary structure comprises 159 residues: Ribosome maturation factor RimP (159 aa).

This sequence belongs to the RimP family.

The protein resides in the cytoplasm. Required for maturation of 30S ribosomal subunits. The sequence is that of Ribosome maturation factor RimP from Geobacter sulfurreducens (strain ATCC 51573 / DSM 12127 / PCA).